Consider the following 151-residue polypeptide: Putative pre-16S rRNA nuclease (151 aa).

This sequence belongs to the YqgF nuclease family.

The protein resides in the cytoplasm. Its function is as follows. Could be a nuclease involved in processing of the 5'-end of pre-16S rRNA. This chain is Putative pre-16S rRNA nuclease, found in Nitrosospira multiformis (strain ATCC 25196 / NCIMB 11849 / C 71).